Reading from the N-terminus, the 149-residue chain is Calmodulin (149 aa).

A2 bears the N-acetylalanine mark. EF-hand domains follow at residues 8–43, 44–79, 81–116, and 117–149; these read EQVSEFKEAFSLFDKDGDGQITTKELGTVMRSLGQN, PSESELQDMINEVDADNNGTIDFPEFLTMMARKMKD, DSEEEIREAFKVFDRDNNGFISAAELRHVMTSIGEK, and LTDDEVDEMIREADQDGDGRIDYNEFVQLMMQK. Ca(2+) contacts are provided by D21, D23, D25, Q27, E32, D57, D59, N61, T63, E68, D94, D96, N98, E105, D130, D132, D134, R136, and E141.

It belongs to the calmodulin family.

Its function is as follows. Calmodulin mediates the control of a large number of enzymes, ion channels and other proteins by Ca(2+). Among the enzymes to be stimulated by the calmodulin-Ca(2+) complex are a number of protein kinases and phosphatases. The polypeptide is Calmodulin (Colletotrichum gloeosporioides (Anthracnose fungus)).